Reading from the N-terminus, the 465-residue chain is Serine/threonine-protein kinase 38 (465 aa).

Alanine 2 bears the N-acetylalanine mark. The tract at residues 62 to 87 is interaction with S100B; sequence KRLRRSAHARKETEFLRLKRTRLGLE. Position 74 is a phosphothreonine (threonine 74). The Protein kinase domain occupies 89 to 382; it reads FESLKVIGRG…VEEIKSNSFF (294 aa). ATP-binding positions include 95–103 and lysine 118; that span reads IGRGAFGEV. Residue aspartate 212 is the Proton acceptor of the active site. The residue at position 264 (serine 264) is a Phosphoserine. A Phosphoserine; by autocatalysis modification is found at serine 281. Positions 306 to 311 match the UFM1-interacting motif (UFIM) motif; the sequence is WSLGVI. Residues 383–455 form the AGC-kinase C-terminal domain; sequence EGVDWEHIRE…KRFEGLTARG (73 aa). Threonine 444 carries the phosphothreonine; by STK24/MST3 modification.

This sequence belongs to the protein kinase superfamily. AGC Ser/Thr protein kinase family. As to quaternary structure, homodimeric S100B binds two molecules of STK38. Interacts with MOB1 and MOB2. Interacts with MAP3K1 and MAP3K2 (via the kinase catalytic domain). Forms a tripartite complex with MOBKL1B and STK3/MST2. Interacts with MICAL1; leading to inhibit the protein kinase activity by antagonizing activation by MST1/STK4. Mg(2+) is required as a cofactor. Post-translationally, ISGylated. Phosphorylated by STK3/MST2 and this is enhanced by MOBKL1B. As to expression, ubiquitously expressed with highest levels observed in peripheral blood leukocytes.

Its subcellular location is the nucleus. It is found in the cytoplasm. The protein resides in the chromosome. It carries out the reaction L-seryl-[protein] + ATP = O-phospho-L-seryl-[protein] + ADP + H(+). The catalysed reaction is L-threonyl-[protein] + ATP = O-phospho-L-threonyl-[protein] + ADP + H(+). Activated by binding of S100B which releases autoinhibitory N-lobe interactions, enabling ATP to bind and the autophosphorylation of Ser-281. Thr-444 then undergoes calcium-dependent phosphorylation by STK24/MST3. Interactions between phosphorylated Thr-444 and the N-lobe promote additional structural changes that complete the activation of the kinase. Autoinhibition is also released by the binding of MOB1/MOBKL1A and MOB2/HCCA2 to the N-terminal of STK38. Its function is as follows. Serine/threonine-protein kinase that acts as a negative regulator of MAP3K1/2 signaling. Converts MAP3K2 from its phosphorylated form to its non-phosphorylated form and inhibits autophosphorylation of MAP3K2. Acts as an ufmylation 'reader' in a kinase-independent manner: specifically recognizes and binds mono-ufmylated histone H4 in response to DNA damage, promoting the recruitment of SUV39H1 to the double-strand breaks, resulting in ATM activation. The sequence is that of Serine/threonine-protein kinase 38 from Homo sapiens (Human).